The chain runs to 364 residues: Probable transcription factor At4g00390 (364 aa).

The disordered stretch occupies residues 1-149 (MTKKLDPPTA…STKRVKKDEE (149 aa)). Over residues 13-32 (SDEDDVETSEDDSSSSEEDE) the composition is skewed to acidic residues. Low complexity predominate over residues 39-80 (ATTAAAPAKSTAVSAATPAKSTSVSAAAPSKSTAVSAAADSD). Over residues 81-93 (SGSESETDSDSES) the composition is skewed to acidic residues.

The protein belongs to the GeBP family.

This chain is Probable transcription factor At4g00390, found in Arabidopsis thaliana (Mouse-ear cress).